The primary structure comprises 695 residues: Lactotransferrin (695 aa).

An N-terminal signal peptide occupies residues 1 to 6 (LGLCLA). Transferrin-like domains lie at 12–339 (VRWC…NLRE) and 351–680 (VVWC…NLRR). Disulfide bonds link cysteine 15–cysteine 51 and cysteine 25–cysteine 42. Position 66 (aspartate 66) interacts with Fe(3+). The active site involves lysine 79. A Fe(3+)-binding site is contributed by tyrosine 98. Cystine bridges form between cysteine 121-cysteine 204, cysteine 163-cysteine 179, cysteine 166-cysteine 189, cysteine 176-cysteine 187, and cysteine 237-cysteine 251. Threonine 123, arginine 127, alanine 129, and glycine 130 together coordinate hydrogencarbonate. Asparagine 143 carries N-linked (GlcNAc...) asparagine glycosylation. Tyrosine 198 is a binding site for Fe(3+). Position 259 (histidine 259) interacts with Fe(3+). Catalysis depends on serine 265, which acts as the Nucleophile. A glycan (N-linked (GlcNAc...) asparagine) is linked at asparagine 287. Disulfide bonds link cysteine 354–cysteine 386 and cysteine 364–cysteine 377. Residue aspartate 401 participates in Fe(3+) binding. Intrachain disulfides connect cysteine 411–cysteine 690, cysteine 431–cysteine 653, cysteine 463–cysteine 538, cysteine 487–cysteine 681, cysteine 497–cysteine 511, cysteine 508–cysteine 521, cysteine 579–cysteine 593, and cysteine 631–cysteine 636. Proline 436 contacts D-glucose. Tyrosine 439 is a Fe(3+) binding site. 4 residues coordinate hydrogencarbonate: threonine 465, arginine 469, alanine 471, and alanine 472. A glycan (N-linked (GlcNAc...) asparagine) is linked at asparagine 482. Tyrosine 532 provides a ligand contact to Fe(3+). Residue asparagine 600 coordinates D-glucose. Histidine 601 provides a ligand contact to Fe(3+). Tyrosine 666 contributes to the D-glucose binding site.

It belongs to the transferrin family. As to quaternary structure, monomer. Found in a complex with LTF, CLU, EPPIN and SEMG1. Found in a complex with MPO and LTF; interacts directly with CP, allows Fe(3+) incorporation into LTF and activation of CP ferroxidase activity. Poly-N-acetyllactosaminic carbohydrate moiety seems to be needed for TLR4 activation.

The protein resides in the secreted. The protein localises to the cytoplasmic granule. Transferrins are iron binding transport proteins which can bind two Fe(3+) ions in association with the binding of an anion, usually bicarbonate. In terms of biological role, major iron-binding and multifunctional protein found in exocrine fluids such as breast milk and mucosal secretions. Has antimicrobial activity, which depends on the extracellular cation concentration. Antimicrobial properties include bacteriostasis, which is related to its ability to sequester free iron and thus inhibit microbial growth, as well as direct bactericidal properties leading to the release of lipopolysaccharides from the bacterial outer membrane. Can also prevent bacterial biofilm development in P.aeruginosa infection. Has weak antifungal activity against C.albicans. Has anabolic, differentiating and anti-apoptotic effects on osteoblasts and can also inhibit osteoclastogenesis, possibly playing a role in the regulation of bone growth. Promotes binding of species C adenoviruses to epithelial cells, promoting adenovirus infection. Can inhibit papillomavirus infections. Stimulates the TLR4 signaling pathway leading to NF-kappa-B activation and subsequent pro-inflammatory cytokine production while also interfering with the lipopolysaccharide (LPS)-stimulated TLR4 signaling. Inhibits neutrophil granulocyte migration to sites of apoptosis, when secreted by apoptotic cells. Stimulates VEGFA-mediated endothelial cell migration and proliferation. Binds heparin, chondroitin sulfate and possibly other glycosaminoglycans (GAGs). Also binds specifically to pneumococcal surface protein A (PspA), the lipid A portion of bacterial lipopolysaccharide (LPS), lysozyme and DNA. Functionally, lactoferricin binds to the bacterial surface and is crucial for the bactericidal functions. Has some antiviral activity against papillomavirus infection. N-terminal region shows strong antifungal activity against C.albicans. Contains two BBXB heparin-binding consensus sequences that appear to form the predominate functional GAG-binding site. Its function is as follows. The lactotransferrin transferrin-like domain 1 functions as a serine protease of the peptidase S60 family that cuts arginine rich regions. This function contributes to the antimicrobial activity. Shows a preferential cleavage at -Arg-Ser-Arg-Arg-|- and -Arg-Arg-Ser-Arg-|-, and of Z-Phe-Arg-|-aminomethylcoumarin sites. The sequence is that of Lactotransferrin (LTF) from Equus caballus (Horse).